The primary structure comprises 114 residues: Large ribosomal subunit protein uL22 (114 aa).

The protein belongs to the universal ribosomal protein uL22 family. As to quaternary structure, part of the 50S ribosomal subunit.

Functionally, this protein binds specifically to 23S rRNA; its binding is stimulated by other ribosomal proteins, e.g. L4, L17, and L20. It is important during the early stages of 50S assembly. It makes multiple contacts with different domains of the 23S rRNA in the assembled 50S subunit and ribosome. In terms of biological role, the globular domain of the protein is located near the polypeptide exit tunnel on the outside of the subunit, while an extended beta-hairpin is found that lines the wall of the exit tunnel in the center of the 70S ribosome. The sequence is that of Large ribosomal subunit protein uL22 from Streptococcus uberis (strain ATCC BAA-854 / 0140J).